Consider the following 428-residue polypeptide: Histidine--tRNA ligase (428 aa).

The protein belongs to the class-II aminoacyl-tRNA synthetase family. As to quaternary structure, homodimer.

The protein localises to the cytoplasm. It catalyses the reaction tRNA(His) + L-histidine + ATP = L-histidyl-tRNA(His) + AMP + diphosphate + H(+). The protein is Histidine--tRNA ligase of Buchnera aphidicola subsp. Schizaphis graminum (strain Sg).